The chain runs to 320 residues: Lipoyl synthase (320 aa).

[4Fe-4S] cluster contacts are provided by cysteine 67, cysteine 72, cysteine 78, cysteine 93, cysteine 97, cysteine 100, and serine 307. The Radical SAM core domain maps to 79 to 296 (FNHGTATFMI…RDKANEMGFE (218 aa)).

Belongs to the radical SAM superfamily. Lipoyl synthase family. [4Fe-4S] cluster is required as a cofactor.

The protein resides in the cytoplasm. It carries out the reaction [[Fe-S] cluster scaffold protein carrying a second [4Fe-4S](2+) cluster] + N(6)-octanoyl-L-lysyl-[protein] + 2 oxidized [2Fe-2S]-[ferredoxin] + 2 S-adenosyl-L-methionine + 4 H(+) = [[Fe-S] cluster scaffold protein] + N(6)-[(R)-dihydrolipoyl]-L-lysyl-[protein] + 4 Fe(3+) + 2 hydrogen sulfide + 2 5'-deoxyadenosine + 2 L-methionine + 2 reduced [2Fe-2S]-[ferredoxin]. It functions in the pathway protein modification; protein lipoylation via endogenous pathway; protein N(6)-(lipoyl)lysine from octanoyl-[acyl-carrier-protein]: step 2/2. In terms of biological role, catalyzes the radical-mediated insertion of two sulfur atoms into the C-6 and C-8 positions of the octanoyl moiety bound to the lipoyl domains of lipoate-dependent enzymes, thereby converting the octanoylated domains into lipoylated derivatives. The polypeptide is Lipoyl synthase (Haemophilus influenzae (strain PittEE)).